Consider the following 372-residue polypeptide: Queuine tRNA-ribosyltransferase (372 aa).

Asp-92 serves as the catalytic Proton acceptor. Residues 92–96 (DSGGY), Asp-146, Gln-188, and Gly-215 each bind substrate. The tract at residues 246 to 252 (GIGSLRE) is RNA binding. The Nucleophile role is filled by Asp-265. The RNA binding; important for wobble base 34 recognition stretch occupies residues 270-274 (TRLGR). Zn(2+) contacts are provided by Cys-303, Cys-305, Cys-308, and His-334.

This sequence belongs to the queuine tRNA-ribosyltransferase family. As to quaternary structure, homodimer. Within each dimer, one monomer is responsible for RNA recognition and catalysis, while the other monomer binds to the replacement base PreQ1. The cofactor is Zn(2+).

It catalyses the reaction 7-aminomethyl-7-carbaguanine + guanosine(34) in tRNA = 7-aminomethyl-7-carbaguanosine(34) in tRNA + guanine. The protein operates within tRNA modification; tRNA-queuosine biosynthesis. Functionally, catalyzes the base-exchange of a guanine (G) residue with the queuine precursor 7-aminomethyl-7-deazaguanine (PreQ1) at position 34 (anticodon wobble position) in tRNAs with GU(N) anticodons (tRNA-Asp, -Asn, -His and -Tyr). Catalysis occurs through a double-displacement mechanism. The nucleophile active site attacks the C1' of nucleotide 34 to detach the guanine base from the RNA, forming a covalent enzyme-RNA intermediate. The proton acceptor active site deprotonates the incoming PreQ1, allowing a nucleophilic attack on the C1' of the ribose to form the product. After dissociation, two additional enzymatic reactions on the tRNA convert PreQ1 to queuine (Q), resulting in the hypermodified nucleoside queuosine (7-(((4,5-cis-dihydroxy-2-cyclopenten-1-yl)amino)methyl)-7-deazaguanosine). This is Queuine tRNA-ribosyltransferase from Prochlorococcus marinus (strain MIT 9211).